We begin with the raw amino-acid sequence, 615 residues long: Putative DNA ligase 205R (615 aa).

Lys-101 (N6-AMP-lysine intermediate) is an active-site residue.

This sequence belongs to the NAD-dependent DNA ligase family.

It carries out the reaction NAD(+) + (deoxyribonucleotide)n-3'-hydroxyl + 5'-phospho-(deoxyribonucleotide)m = (deoxyribonucleotide)n+m + AMP + beta-nicotinamide D-nucleotide.. Its function is as follows. Catalyzes the formation of phosphodiester linkages between 5'-phosphoryl and 3'-hydroxyl groups in double-stranded DNA using NAD as a coenzyme and as the energy source for the reaction. This chain is Putative DNA ligase 205R, found in Invertebrate iridescent virus 6 (IIV-6).